Reading from the N-terminus, the 304-residue chain is Calcium release-activated calcium channel protein 1 (304 aa).

Pro residues predominate over residues Met1–His11. Positions Met1–Pro50 are disordered. At Met1–Lys89 the chain is on the cytoplasmic side. The segment at Pro3 to Pro49 is required for generation of inwardly rectifying CRAC currents. The segment covering Ser12–Ser27 has biased composition (low complexity). Residues Pro39–Ser61 are AKAP5 association region. The span at Gly41–Pro50 shows a compositional bias: pro residues. Residues Ser72–Ser92 form an interaction with STIM1 region. A helical membrane pass occupies residues Ala90 to Val107. Residues Glu108–Leu121 are Extracellular-facing. Residues Leu122–Ile142 form a helical membrane-spanning segment. Over Ser143–Glu175 the chain is Cytoplasmic. A helical membrane pass occupies residues Leu176–Leu196. The Extracellular portion of the chain corresponds to Cys197–Ala237. A glycan (N-linked (GlcNAc...) asparagine) is linked at Asn225. The chain crosses the membrane as a helical span at residues Ala238–Val258. The Cytoplasmic segment spans residues His259–Ala304. The interaction with STIM1 stretch occupies residues Glu275–His295. Thr298 is modified (phosphothreonine).

Belongs to the Orai family. As to quaternary structure, oligomerizes in homomeric and heteromeric ORAI complexes. Native CRAC channels most likely consist of hexameric ORAI heteromers, implying that diverse ORAI1, ORAI2 and ORAI3 subunit combinations with distinct biophysical properties can operate in a cell-type specific way. ARC channels are heteropentamers consisting of three ORAI1 and two ORAI3 subunits. Interacts with STIM1 and STIM2; this regulates channel activity. Interacts with CALM; this may displace STIM1 and STIM2 and might thereby modulate channel activity. Interacts (via N-terminus) with AKAP5 upon store depletion. Interacts with CRACR2A/EFCAB4B; the interaction is direct and takes place in absence of Ca(2+). Forms a complex with CRACR2A/EFCAB4B and STIM1 at low concentration of Ca(2+), the complex dissociates at elevated Ca(2+) concentrations. Interacts with ASPH (isoform 8). Interacts with SLC35G1. Interacts with UBQLN1. Interacts with ADCY8; interaction is calcium store depletion independent; interaction occurs in membrane raft; interaction increases markedly after store depletion; positively regulates SOCE-induced adenylate cyclase activity; contributes to the targeting of ADCY8 to discrete regions of the plasma membrane that are shielded from other calcium events. Interacts with EFHB; the interaction takes place upon Ca(2+)-store depletion. Interacts (via N- and C-termini) with ATP2C2 (via N-terminus); this interaction regulates Ca(2+) influx at the plasma membrane. Interacts with TSPAN18; this interaction regulates ORAI1 exit from the endoplasmic (ER), and/or Golgi, and trafficking to the cell surface. Post-translationally, N-glycosylated. N-glycosylation inhibits channel activity in T cells. Ubiquitinated. In terms of processing, cys-195 is oxidated, leading to inactivation of channel activity. As to expression, expressed in lactating mammary epithelium (at protein level).

The protein localises to the cell membrane. It localises to the basolateral cell membrane. The catalysed reaction is Ca(2+)(in) = Ca(2+)(out). Its activity is regulated as follows. Oxidation at Cys-197 leads to inactivation of channel activity. In terms of biological role, pore-forming subunit of two major inward rectifying Ca(2+) channels at the plasma membrane: Ca(2+) release-activated Ca(2+) (CRAC) channels and arachidonate-regulated Ca(2+)-selective (ARC) channels. Assembles with ORAI2 and ORAI3 to form hexameric CRAC channels that mediate Ca(2+) influx upon depletion of endoplasmic reticulum Ca(2+) store and channel activation by Ca(2+) sensor STIM1, a process known as store-operated Ca(2+) entry (SOCE). Various pore subunit combinations may account for distinct CRAC channel spatiotemporal and cell-type specific dynamics. ORAI1 mainly contributes to the generation of Ca(2+) plateaus involved in sustained Ca(2+) entry and is dispensable for cytosolic Ca(2+) oscillations, whereas ORAI2 and ORAI3 generate oscillatory patterns. CRAC channels assemble in Ca(2+) signaling microdomains where Ca(2+) influx is coupled to calmodulin and calcineurin signaling and activation of NFAT transcription factors recruited to ORAI1 via AKAP5. Activates NFATC2/NFAT1 and NFATC3/NFAT4-mediated transcriptional responses. CRAC channels are the main pathway for Ca(2+) influx in T cells and promote the immune response to pathogens by activating NFAT-dependent cytokine and chemokine transcription. Assembles with ORAI3 to form channels that mediate store-independent Ca(2+) influx in response to inflammatory metabolites arachidonate or its derivative leukotriene C4, termed ARC and LRC channels respectively. Plays a prominent role in Ca(2+) influx at the basolateral membrane of mammary epithelial cells independently of the Ca(2+) content of endoplasmic reticulum or Golgi stores. May mediate transepithelial transport of large quantities of Ca(2+) for milk secretion. The protein is Calcium release-activated calcium channel protein 1 (Orai1) of Mus musculus (Mouse).